A 236-amino-acid polypeptide reads, in one-letter code: Protein-L-isoaspartate O-methyltransferase 1 (236 aa).

Ser86 is a catalytic residue.

Belongs to the methyltransferase superfamily. L-isoaspartyl/D-aspartyl protein methyltransferase family.

The protein resides in the cytoplasm. It carries out the reaction [protein]-L-isoaspartate + S-adenosyl-L-methionine = [protein]-L-isoaspartate alpha-methyl ester + S-adenosyl-L-homocysteine. In terms of biological role, catalyzes the methyl esterification of L-isoaspartyl residues in peptides and proteins that result from spontaneous decomposition of normal L-aspartyl and L-asparaginyl residues. It plays a role in the repair and/or degradation of damaged proteins. This chain is Protein-L-isoaspartate O-methyltransferase 1, found in Nitrosospira multiformis (strain ATCC 25196 / NCIMB 11849 / C 71).